Consider the following 37-residue polypeptide: Large ribosomal subunit protein bL36 (37 aa).

The protein belongs to the bacterial ribosomal protein bL36 family.

This is Large ribosomal subunit protein bL36 from Bifidobacterium adolescentis (strain ATCC 15703 / DSM 20083 / NCTC 11814 / E194a).